Consider the following 274-residue polypeptide: ATP synthase subunit a (274 aa).

5 helical membrane passes run Thr-43–Phe-63, Val-103–Leu-123, Asp-149–Ile-169, Leu-223–Pro-243, and Ala-245–Val-265.

Belongs to the ATPase A chain family. As to quaternary structure, F-type ATPases have 2 components, CF(1) - the catalytic core - and CF(0) - the membrane proton channel. CF(1) has five subunits: alpha(3), beta(3), gamma(1), delta(1), epsilon(1). CF(0) has three main subunits: a(1), b(2) and c(9-12). The alpha and beta chains form an alternating ring which encloses part of the gamma chain. CF(1) is attached to CF(0) by a central stalk formed by the gamma and epsilon chains, while a peripheral stalk is formed by the delta and b chains.

The protein resides in the cell inner membrane. In terms of biological role, key component of the proton channel; it plays a direct role in the translocation of protons across the membrane. This Yersinia pestis bv. Antiqua (strain Antiqua) protein is ATP synthase subunit a.